We begin with the raw amino-acid sequence, 391 residues long: Zinc finger protein 414 (391 aa).

The disordered stretch occupies residues 1 to 110; that stretch reads MDEEPSGPSL…RRPPPGKQIP (110 aa). The span at 84–93 shows a compositional bias: polar residues; that stretch reads GPTSTVSGTS. 3 consecutive C2H2-type zinc fingers follow at residues 109–133, 145–169, and 176–201; these read IPCS…LRTH, FRCS…GKLH, and FKCE…CAEH. 3 disordered regions span residues 201–243, 274–312, and 344–391; these read HAQS…LEPF, LAAA…SGHA, and HLED…FSPL. Residues 214-226 are compositionally biased toward basic and acidic residues; sequence LDRESPASERPPE. Positions 227 to 236 are enriched in pro residues; it reads SDPAPAPGLP. A compositionally biased stretch (low complexity) spans 274-286; that stretch reads LAAAPGPPASSAA. The C2H2-type 4 zinc finger occupies 326–348; it reads YSCMQCAFSTASRPAMTLHLEDH. A compositionally biased stretch (pro residues) spans 353 to 372; the sequence is PAAPAPGQPRPDAPADPAPL.

The protein belongs to the krueppel C2H2-type zinc-finger protein family.

Its subcellular location is the nucleus. Functionally, may be involved in transcriptional regulation. This chain is Zinc finger protein 414 (ZNF414), found in Bos taurus (Bovine).